The sequence spans 430 residues: MGPATGMTPDKNIESPTAEKVPGLSQTENMGSLPEEVGAARPKASMVDNGATDEELTNLNWLHESTNLLNNFSLGSEGVSAGSPLYDIEGDLSPSGCQTPEKLSASSKPPYSFSLLIYMAIEHSPNKCLPVKDIYSWILDRFPYFSTAPTGWKNSVRHNLSLNKYFQKVERSHGKVNGKGSLWCVDPEYKPSLIQALKKQPFSSALALYTPPTSPTSVSSRPYVLTSASRRKQIHYVKDSDIDAATAMMLLNSSIKEEALDRQKPQPLKVVLPKKRSYASAFKHCPPLSLQENDGEVINIDPKEDHNYSASGGDSQRCESRSSVSSLSSVEEVYEFIPKNSRTGSDGSEGFHSEDDTDIDYEEDTLGDNGYVPQPSGNDLHGSKLRKEASQDIDEELKEAAGSLLHLAGIRTCLDSLLKTAKAQSHKHRK.

The segment at 1–47 is disordered; that stretch reads MGPATGMTPDKNIESPTAEKVPGLSQTENMGSLPEEVGAARPKASMV. The segment at residues 108–204 is a DNA-binding region (fork-head); that stretch reads KPPYSFSLLI…QALKKQPFSS (97 aa). Disordered stretches follow at residues 299-326 and 338-391; these read NIDP…SVSS and PKNS…EASQ. The span at 355–366 shows a compositional bias: acidic residues; that stretch reads DDTDIDYEEDTL. A compositionally biased stretch (basic and acidic residues) spans 381–390; sequence HGSKLRKEAS.

In terms of tissue distribution, expressed in the developing eye from stage 23. Localized to the prospective retinal layer and a layer of cells lateral to the ventricular zone. At stage 29, expression extends to the branchial arches and the brain. At stage 33/34, expressed in the vagal ganglion. At stage 36, expression in the retina decreases. Not expressed in the eye lens.

Its subcellular location is the nucleus. This is Forkhead box protein N2 from Xenopus laevis (African clawed frog).